The primary structure comprises 361 residues: Trans-2,3-enoyl-CoA reductase-like (361 aa).

Residues Ser-33 and Ser-35 each carry the phosphoserine modification. 4 helical membrane-spanning segments follow: residues 139-159 (VGWT…YLLF), 181-201 (VHLA…ETLF), 215-235 (LIKG…YINH), and 309-329 (ISFT…LMTI).

It belongs to the steroid 5-alpha reductase family. As to expression, expression is highest in the heart with very low to almost undetectable levels in brain, skeletal muscle, stomach, pancreas, liver, kidney, small intestine, and uterus.

The protein resides in the membrane. The protein localises to the endoplasmic reticulum. The chain is Trans-2,3-enoyl-CoA reductase-like (Tecrl) from Mus musculus (Mouse).